The following is a 401-amino-acid chain: Probable tRNA sulfurtransferase (401 aa).

In terms of domain architecture, THUMP spans Glu-60–Asp-165. ATP is bound by residues Met-183 to Leu-184, His-208 to Phe-209, Arg-265, Gly-287, and Gln-296.

This sequence belongs to the ThiI family.

It localises to the cytoplasm. The enzyme catalyses [ThiI sulfur-carrier protein]-S-sulfanyl-L-cysteine + a uridine in tRNA + 2 reduced [2Fe-2S]-[ferredoxin] + ATP + H(+) = [ThiI sulfur-carrier protein]-L-cysteine + a 4-thiouridine in tRNA + 2 oxidized [2Fe-2S]-[ferredoxin] + AMP + diphosphate. It carries out the reaction [ThiS sulfur-carrier protein]-C-terminal Gly-Gly-AMP + S-sulfanyl-L-cysteinyl-[cysteine desulfurase] + AH2 = [ThiS sulfur-carrier protein]-C-terminal-Gly-aminoethanethioate + L-cysteinyl-[cysteine desulfurase] + A + AMP + 2 H(+). The protein operates within cofactor biosynthesis; thiamine diphosphate biosynthesis. In terms of biological role, catalyzes the ATP-dependent transfer of a sulfur to tRNA to produce 4-thiouridine in position 8 of tRNAs, which functions as a near-UV photosensor. Also catalyzes the transfer of sulfur to the sulfur carrier protein ThiS, forming ThiS-thiocarboxylate. This is a step in the synthesis of thiazole, in the thiamine biosynthesis pathway. The sulfur is donated as persulfide by IscS. The protein is Probable tRNA sulfurtransferase of Geobacillus kaustophilus (strain HTA426).